We begin with the raw amino-acid sequence, 558 residues long: Pentatricopeptide repeat-containing protein At1g06140, mitochondrial (558 aa).

A mitochondrion-targeting transit peptide spans methionine 1–leucine 79. 13 PPR repeats span residues glutamate 38–tryptophan 68, asparagine 71–histidine 103, aspartate 108–lysine 142, aspartate 143–arginine 173, asparagine 174–leucine 208, aspartate 209–aspartate 243, serine 245–arginine 275, asparagine 276–proline 310, asparagine 311–methionine 345, aspartate 346–arginine 376, asparagine 377–proline 411, asparagine 412–proline 447, and glutamate 448–serine 482. Residues alanine 483–glycine 558 form a type E motif region.

Belongs to the PPR family. PCMP-E subfamily.

It localises to the mitochondrion. This Arabidopsis thaliana (Mouse-ear cress) protein is Pentatricopeptide repeat-containing protein At1g06140, mitochondrial (PCMP-E61).